The chain runs to 139 residues: uncharacterized protein (139 aa).

3 consecutive transmembrane segments (helical) span residues 38–60, 72–94, and 114–136; these read YFLH…LYVF, FIIL…CAGS, and ITVV…LIVA.

The protein localises to the cell membrane. This is an uncharacterized protein from Treponema pallidum (strain Nichols).